A 285-amino-acid polypeptide reads, in one-letter code: Probable E3 ubiquitin-protein ligase IE1 (285 aa).

Topologically, residues 1–201 (MASKDSDVRC…LPGYWDRDDR (201 aa)) are cytoplasmic. The RING-CH-type zinc finger occupies 124-183 (SIDEEGKQCWICRDGESLPEARYCNCYGDLQYCHEECLKTWISMSGEKKCKFCQTPYKVN). Cys-132, Cys-135, Cys-147, Cys-149, His-157, Cys-160, Cys-173, and Cys-176 together coordinate Zn(2+). A helical membrane pass occupies residues 202–222 (FVFIAGFIGMGTILAGWIASF). The Extracellular segment spans residues 223–238 (FYLLVVLCGKYFTYKD). Residues 239–259 (VMIVVGGLAIIQVVGLMFSLF) form a helical membrane-spanning segment. The Cytoplasmic segment spans residues 260–285 (MYFQIGNLLRQYINYMTETNIDPLRT).

The protein localises to the membrane. The catalysed reaction is S-ubiquitinyl-[E2 ubiquitin-conjugating enzyme]-L-cysteine + [acceptor protein]-L-lysine = [E2 ubiquitin-conjugating enzyme]-L-cysteine + N(6)-ubiquitinyl-[acceptor protein]-L-lysine.. The protein operates within protein modification; protein ubiquitination. In terms of biological role, controls the expression of later classes of genes and also of the IE genes (Potential). E3 ubiquitin-protein ligase. E3 ubiquitin ligases accept ubiquitin from an E2 ubiquitin-conjugating enzyme in the form of a thioester and then directly transfer the ubiquitin to targeted substrates. The polypeptide is Probable E3 ubiquitin-protein ligase IE1 (IE1) (Bovine herpesvirus 4 (strain DN-599) (BoHV-4)).